The chain runs to 443 residues: MRGFSNEIILKRTLTLSDFTLRYHKRGITALQVIKAPSVSNVPVLLSGDNYGYFVMWDLVTKRPITHMEIEGNSHIIAFWWVETTNVLYILSKDSMLRIFELDSSTQRSIDLVRKLSQANKTDHLQWTKIYEMPINTLNFANFIIEAEVKPTKDNKSYRLVCCHTDDSETIDIYQIIEDSTFKLKRPFNNINFPRFLKQQNFLGISKDSKFGIIMRFAKLNDVIFLGYENGFVVGFKITFDEGLQRDIAELVHVSNDHYPNPILDMCVSGDELYSCSTDDFITKYKIPVNLQLETKYLRDDALLIKCPSSLRVSEPSKVHLPLKNIGHIDKVKDDYLVVSSWSGMTIVYNMRTSEVEQTFVKSKNNLVVSDSSMGDLTNGSGSNTESSSKSHNYKVGAMTCLESFDVQSDGLRLGQLRRIKALAKCNWCLIGYEDGTIKLNKI.

WD repeat units follow at residues 23–67 (YHKR…PITH), 71–110 (EGNS…QRSI), 258–295 (HYPN…QLET), and 318–359 (KVHL…VEQT). Positions 372–391 (SSMGDLTNGSGSNTESSSKS) are disordered. Positions 378–391 (TNGSGSNTESSSKS) are enriched in low complexity.

It belongs to the WD repeat ASA1 family. In terms of assembly, component of the ASTRA chromatin remodeling machinery complex composed of at least RVB1, RVB2, TRA1, TEL2, TTI1 and TTI2.

The protein localises to the nucleus. Functionally, component of the ASTRA complex involved in chromatin remodeling. The sequence is that of ASTRA-associated protein 1 (ASA1) from Saccharomyces cerevisiae (strain JAY291) (Baker's yeast).